A 348-amino-acid polypeptide reads, in one-letter code: Fe-S cluster assembly protein DRE2 (348 aa).

The N-terminal SAM-like domain stretch occupies residues 1 to 162 (MSQYKTGLLL…KKASSSTSNL (162 aa)). The interval 137–170 (KTNNTKLQSGSKLPTFKKASSSTSNLPSFKKADH) is disordered. A compositionally biased stretch (polar residues) spans 144-163 (QSGSKLPTFKKASSSTSNLP). Residues 163-242 (PSFKKADHSR…EEELIDEDGS (80 aa)) form a linker region. Ser206 carries the post-translational modification Phosphoserine. The [2Fe-2S] cluster site is built by Cys252, Cys263, Cys266, and Cys268. The interval 252 to 268 (CGKSKTKKKKACKDCTC) is fe-S binding site A. [4Fe-4S] cluster contacts are provided by Cys311, Cys314, Cys322, and Cys325. Short sequence motifs (cx2C motif) lie at residues 311–314 (CGSC) and 322–325 (CSGC). Residues 311–325 (CGSCSLGDAFRCSGC) form a fe-S binding site B region.

It belongs to the anamorsin family. As to quaternary structure, monomer. Interacts with TAH18. Interacts with MIA40. [2Fe-2S] cluster serves as cofactor. Requires [4Fe-4S] cluster as cofactor.

The protein resides in the cytoplasm. The protein localises to the mitochondrion intermembrane space. Its function is as follows. Component of the cytosolic iron-sulfur (Fe-S) protein assembly (CIA) machinery required for the maturation of extramitochondrial Fe-S proteins. Part of an electron transfer chain functioning in an early step of cytosolic Fe-S biogenesis, facilitating the de novo assembly of a [4Fe-4S] cluster on the scaffold complex CFD1-NBP35. Electrons are transferred to DRE2 from NADPH via the FAD- and FMN-containing protein TAH18. TAH18-DRE2 are also required for the assembly of the diferric tyrosyl radical cofactor of ribonucleotide reductase (RNR), probably by providing electrons for reduction during radical cofactor maturation in the catalytic small subunit RNR2. The polypeptide is Fe-S cluster assembly protein DRE2 (Saccharomyces cerevisiae (strain Lalvin EC1118 / Prise de mousse) (Baker's yeast)).